Here is a 205-residue protein sequence, read N- to C-terminus: Outer-membrane lipoprotein carrier protein (205 aa).

The first 19 residues, 1–19 (MKKIIICFIFVFSINVSFA), serve as a signal peptide directing secretion.

Belongs to the LolA family. Monomer.

It localises to the periplasm. Functionally, participates in the translocation of lipoproteins from the inner membrane to the outer membrane. Only forms a complex with a lipoprotein if the residue after the N-terminal Cys is not an aspartate (The Asp acts as a targeting signal to indicate that the lipoprotein should stay in the inner membrane). The polypeptide is Outer-membrane lipoprotein carrier protein (Francisella tularensis subsp. tularensis (strain FSC 198)).